We begin with the raw amino-acid sequence, 259 residues long: Protein odd-skipped-related 1 (259 aa).

3 consecutive C2H2-type zinc fingers follow at residues 168–190 (FVCK…ERTH), 196–218 (YTCD…RYIH), and 224–246 (FKCQ…KTLH).

This sequence belongs to the Odd C2H2-type zinc-finger protein family.

It is found in the nucleus. Transcriptional repressor. Required for pronephric kidney development. This is Protein odd-skipped-related 1 from Xenopus tropicalis (Western clawed frog).